The following is a 296-amino-acid chain: Glucokinase (296 aa).

This sequence belongs to the ROK (NagC/XylR) family. In terms of assembly, homodimer. A divalent metal cation serves as cofactor.

It carries out the reaction D-glucose + ATP = D-glucose 6-phosphate + ADP + H(+). Functionally, catalyzes the phosphorylation of D-glucose to D-glucose 6-phosphate using ATP as the phosphate donor. Has a broad hexose specificity, and in addition to glucose, which shows the highest catalytic efficiency, it can also phosphorylate fructose, mannose, galactose and sorbitol. Can also use CTP, GTP or UTP as phosphoryl donor. This is Glucokinase from Pyrobaculum calidifontis (strain DSM 21063 / JCM 11548 / VA1).